Here is a 565-residue protein sequence, read N- to C-terminus: Efflux pump aunC (565 aa).

A compositionally biased stretch (polar residues) spans 1–14; sequence MSDTARISGGSFTS. A disordered region spans residues 1–57; that stretch reads MSDTARISGGSFTSPPGRDVELNSFKEASQTRLYPYSSRKEEEGREDEQQRPEREED. Basic and acidic residues predominate over residues 38–54; that stretch reads SRKEEEGREDEQQRPER. 14 consecutive transmembrane segments (helical) span residues 59 to 79, 103 to 123, 128 to 148, 164 to 184, 194 to 214, 222 to 242, 257 to 277, 293 to 313, 335 to 355, 378 to 398, 399 to 419, 425 to 445, 457 to 477, and 530 to 550; these read GALT…CIFC, DVGW…LPFG, FFPI…GSFI, VAGL…TQCV, GFIM…GGAF, WCFY…FFTF, AAGL…CLLL, IIAL…LQLW, LYGF…PIWF, VIFA…GPFM, LLSA…HPSS, IGYQ…PVFV, TATA…VSVA, and VHTF…ATVI.

The protein belongs to the major facilitator superfamily. TCR/Tet family.

The protein localises to the cell membrane. Functionally, efflux pump; part of the gene cluster that mediates the biosynthesis of aurasperone B, a dimeric gamma-naphthopyrone. The chain is Efflux pump aunC from Aspergillus niger (strain ATCC MYA-4892 / CBS 513.88 / FGSC A1513).